Here is a 130-residue protein sequence, read N- to C-terminus: MVMFMVFRILGRMTKIEKEIKEEEAKYDLIIKNEAKIEPIVAEEDMEFKQGDIKPIRIKKIKIPPMSVLLICPYGRHRVGHVVAVGEEVPMPIDVEREVDMAMFACGFEGEVKKGDLIGMLLILAAEKRE.

This is an uncharacterized protein from Methanocaldococcus jannaschii (strain ATCC 43067 / DSM 2661 / JAL-1 / JCM 10045 / NBRC 100440) (Methanococcus jannaschii).